A 429-amino-acid polypeptide reads, in one-letter code: Serine hydroxymethyltransferase (429 aa).

(6S)-5,6,7,8-tetrahydrofolate contacts are provided by residues L125 and 129 to 131 (GHL). An N6-(pyridoxal phosphate)lysine modification is found at K234.

This sequence belongs to the SHMT family. In terms of assembly, homodimer. Pyridoxal 5'-phosphate serves as cofactor.

It is found in the cytoplasm. The catalysed reaction is (6R)-5,10-methylene-5,6,7,8-tetrahydrofolate + glycine + H2O = (6S)-5,6,7,8-tetrahydrofolate + L-serine. It participates in one-carbon metabolism; tetrahydrofolate interconversion. The protein operates within amino-acid biosynthesis; glycine biosynthesis; glycine from L-serine: step 1/1. Catalyzes the reversible interconversion of serine and glycine with tetrahydrofolate (THF) serving as the one-carbon carrier. This reaction serves as the major source of one-carbon groups required for the biosynthesis of purines, thymidylate, methionine, and other important biomolecules. Also exhibits THF-independent aldolase activity toward beta-hydroxyamino acids, producing glycine and aldehydes, via a retro-aldol mechanism. This chain is Serine hydroxymethyltransferase, found in Allorhizobium ampelinum (strain ATCC BAA-846 / DSM 112012 / S4) (Agrobacterium vitis (strain S4)).